The following is a 506-amino-acid chain: Anaerobic nitric oxide reductase transcription regulator NorR (506 aa).

At Asp57 the chain carries 4-aspartylphosphate. The 230-residue stretch at 187-416 folds into the Sigma-54 factor interaction domain; the sequence is MIGLSPAMTQ…LEHAIHRAVV (230 aa). ATP-binding positions include 215-222 and 278-287; these read GETGTGKE and ADNGTLFLDE. The H-T-H motif DNA-binding region spans 481–500; sequence WAASARALETDVANLHRLAK.

Its pathway is nitrogen metabolism; nitric oxide reduction. Its function is as follows. Required for the expression of anaerobic nitric oxide (NO) reductase, acts as a transcriptional activator for at least the norVW operon. Activation also requires sigma-54. This Salmonella agona (strain SL483) protein is Anaerobic nitric oxide reductase transcription regulator NorR.